A 1020-amino-acid polypeptide reads, in one-letter code: Calcium-transporting ATPase 10, plasma membrane-type (1020 aa).

Over 1–175 the chain is Cytoplasmic; it reads MESYLEENFG…FVWEALQDTT (175 aa). The interaction with calmodulin stretch occupies residues 21 to 32; that stretch reads ALRRWRKLCGVV. A run of 2 helical transmembrane segments spans residues 176–196 and 199–219; these read LIILAVCAFVSLVVGIAMEGW and GAHDGLGIVASILLVVFVTAT. Residues 220 to 263 are Cytoplasmic-facing; the sequence is SDYRQSLQFKDLDKEKKKIQVQVTRNGFRQRLSIYDLLPGDVVH. Transmembrane regions (helical) follow at residues 264 to 284 and 352 to 372; these read LAIGDQVPADGLFISGFSLLI and GVATIIGKIGLFFAVITFIVL. At 373–400 the chain is on the cytoplasmic side; that stretch reads SQGLISKKYHEGLLLSWSGDDALEMLEH. The chain crosses the membrane as a helical span at residues 401–421; that stretch reads FAIAVTIVVVAVPEGLPLAVT. Catalysis depends on D456, which acts as the 4-aspartylphosphate intermediate. 2 residues coordinate Mg(2+): D758 and D762. Residues 843–863 form a helical membrane-spanning segment; that stretch reads LTAVQLLWVNMIMDTLGALAL. At 864 to 887 the chain is on the cytoplasmic side; sequence ATEPPNDDLMKREPVGRTGKFITN. Transmembrane regions (helical) follow at residues 888–907 and 924–944; these read VMWRNILGQSFYQFIVMWYL and VVLNTIIFNSFVFCQVFNEIS. Topologically, residues 945–961 are cytoplasmic; it reads SREMEKINVLRGILKNY. 2 consecutive transmembrane segments (helical) span residues 962–982 and 995–1015; these read VFLGVLTSTVVFQFIMVQFLG and WIASVLLGLIGMPISAIIKLL. Residues 1016–1020 are Cytoplasmic-facing; it reads PVGSS.

This sequence belongs to the cation transport ATPase (P-type) (TC 3.A.3) family. Type IIB subfamily.

It localises to the membrane. The enzyme catalyses Ca(2+)(in) + ATP + H2O = Ca(2+)(out) + ADP + phosphate + H(+). Activated by calmodulin. In terms of biological role, this magnesium-dependent enzyme catalyzes the hydrolysis of ATP coupled with the translocation of calcium from the cytosol out of the cell, into the endoplasmic reticulum, or into organelles. This Oryza sativa subsp. japonica (Rice) protein is Calcium-transporting ATPase 10, plasma membrane-type.